The chain runs to 146 residues: Ribonuclease VapC41 (146 aa).

A PINc domain is found at 3 to 142 (LCDTNIWLAL…FTQYGGIELR (140 aa)). Mg(2+) is bound by residues aspartate 5 and aspartate 112.

Belongs to the PINc/VapC protein family. It depends on Mg(2+) as a cofactor.

Toxic component of a type II toxin-antitoxin (TA) system. An RNase. Its toxic effect is neutralized by coexpression with cognate antitoxin VapB41. This chain is Ribonuclease VapC41, found in Mycobacterium tuberculosis (strain CDC 1551 / Oshkosh).